The following is a 229-amino-acid chain: Phosphoglycolate phosphatase (229 aa).

The active-site Nucleophile is aspartate 18. Residues aspartate 18, aspartate 20, and aspartate 176 each contribute to the Mg(2+) site.

The protein belongs to the HAD-like hydrolase superfamily. CbbY/CbbZ/Gph/YieH family. Mg(2+) serves as cofactor.

It catalyses the reaction 2-phosphoglycolate + H2O = glycolate + phosphate. It functions in the pathway organic acid metabolism; glycolate biosynthesis; glycolate from 2-phosphoglycolate: step 1/1. In terms of biological role, specifically catalyzes the dephosphorylation of 2-phosphoglycolate. Is involved in the dissimilation of the intracellular 2-phosphoglycolate formed during the DNA repair of 3'-phosphoglycolate ends, a major class of DNA lesions induced by oxidative stress. The sequence is that of Phosphoglycolate phosphatase from Xylella fastidiosa (strain 9a5c).